Here is a 2601-residue protein sequence, read N- to C-terminus: Centrosomal protein of 295 kDa (2601 aa).

Residues 1–560 are necessary for centriole targeting and microtubule association; sequence MKRKVVNTHK…KKTQPTGVGI (560 aa). S14 bears the Phosphoserine mark. Coiled coils occupy residues 207 to 273 and 500 to 552; these read KRPD…EDLA and AARI…KRKK. Residues S654 and S938 each carry the phosphoserine modification. A disordered region spans residues 1008–1029; that stretch reads PSADTKSGKIQEQHSSKSEKGL. Residues 1013–1027 show a composition bias toward basic and acidic residues; sequence KSGKIQEQHSSKSEK. Coiled-coil stretches lie at residues 1053–1082 and 1498–1544; these read LHDS…VELL and IQSH…VSSE. The disordered stretch occupies residues 1558–1580; it reads ADSERTQKSFPTKSNDTLPSSHR. Residues 1565-1577 show a composition bias toward polar residues; the sequence is KSFPTKSNDTLPS. S1637 bears the Phosphoserine mark. Residues 1728–1758 adopt a coiled-coil conformation; that stretch reads QEKLLVQRQTALQQQIQKHEETLKDFFKDSQ. 3 stretches are compositionally biased toward basic and acidic residues: residues 1795–1827, 1985–2003, and 2100–2112; these read RHAD…DLGR, FSEH…KEEE, and DNRD…DSSS. 3 disordered regions span residues 1795 to 1834, 1979 to 2004, and 2085 to 2117; these read RHAD…KPPV, LTDP…EEET, and HPDF…SHCA. At T2473 the chain carries Phosphothreonine. An ALMS motif region spans residues 2478 to 2601; it reads SLQEAFIKRK…LEKLRAKNTC (124 aa). Positions 2556–2581 form a coiled coil; the sequence is RLYNQLAEVKQQKEEKTKQEAYAQNR.

In terms of assembly, interacts (via ALMS motif) with microtubules; this interaction is direct.

It is found in the cytoplasm. It localises to the cytoskeleton. The protein resides in the microtubule organizing center. The protein localises to the centrosome. Its subcellular location is the centriole. It is found in the spindle. Its function is as follows. Centriole-enriched microtubule-binding protein involved in centriole biogenesis. Essential for the generation of the distal portion of new-born centrioles in a CPAP- and CEP120-mediated elongation dependent manner during the cell cycle S/G2 phase after formation of the initiating cartwheel structure. Required for the recruitment of centriolar proteins, such as POC1B, POC5 and CEP135, into the distal portion of centrioles. Also required for centriole-to-centrosome conversion during mitotic progression, but is dispensable for cartwheel removal or centriole disengagement. Binds to and stabilizes centriolar microtubule. May be involved in ciliogenesis. The protein is Centrosomal protein of 295 kDa of Homo sapiens (Human).